The chain runs to 940 residues: UvrABC system protein A (940 aa).

31 to 38 serves as a coordination point for ATP; sequence GLSGSGKS. A C4-type zinc finger spans residues 252–279; sequence CPHCGYSMQELEPRLFSFNNPAGACGTC. 2 consecutive ABC transporter domains span residues 309-586 and 606-936; these read WDQK…PDSL and RDKN…RFLK. 639–646 lines the ATP pocket; the sequence is GVSGSGKS. Residues 739 to 765 form a C4-type zinc finger; the sequence is CEACQGDGVIKVEMHFLPDVYVPCDVC.

The protein belongs to the ABC transporter superfamily. UvrA family. As to quaternary structure, forms a heterotetramer with UvrB during the search for lesions.

It localises to the cytoplasm. In terms of biological role, the UvrABC repair system catalyzes the recognition and processing of DNA lesions. UvrA is an ATPase and a DNA-binding protein. A damage recognition complex composed of 2 UvrA and 2 UvrB subunits scans DNA for abnormalities. When the presence of a lesion has been verified by UvrB, the UvrA molecules dissociate. The sequence is that of UvrABC system protein A from Vibrio vulnificus (strain CMCP6).